Here is a 201-residue protein sequence, read N- to C-terminus: Recombination protein RecR (201 aa).

A C4-type zinc finger spans residues 57–74; it reads CSICGNITATDTDPCVIC. The region spanning 82-178 is the Toprim domain; sequence STVFVVENSR…AVTRLAHGLA (97 aa).

The protein belongs to the RecR family.

Its function is as follows. May play a role in DNA repair. It seems to be involved in an RecBC-independent recombinational process of DNA repair. It may act with RecF and RecO. This is Recombination protein RecR from Leuconostoc mesenteroides subsp. mesenteroides (strain ATCC 8293 / DSM 20343 / BCRC 11652 / CCM 1803 / JCM 6124 / NCDO 523 / NBRC 100496 / NCIMB 8023 / NCTC 12954 / NRRL B-1118 / 37Y).